Reading from the N-terminus, the 473-residue chain is Hyaluronidase-2 (473 aa).

The N-terminal stretch at 1–20 is a signal peptide; it reads MWTGLGPAVTLALVLVVAWA. Intrachain disulfides connect Cys47-Cys343 and Cys214-Cys230. 2 N-linked (GlcNAc...) asparagine glycosylation sites follow: Asn77 and Asn106. Glu138 serves as the catalytic Proton donor. 2 N-linked (GlcNAc...) asparagine glycosylation sites follow: Asn340 and Asn360. An EGF-like domain is found at 364 to 442; that stretch reads AAQYCSWAQC…YLGWGGEQCQ (79 aa). 3 disulfides stabilise this stretch: Cys368/Cys379, Cys373/Cys430, and Cys432/Cys441. Gly451 carries GPI-anchor amidated glycine lipidation. A propeptide spans 452–473 (removed in mature form); sequence ASGAWAGSHLTGLLAVAVLAFT.

The protein belongs to the glycosyl hydrolase 56 family. In terms of assembly, interacts with MST1R.

It localises to the cell membrane. It catalyses the reaction Random hydrolysis of (1-&gt;4)-linkages between N-acetyl-beta-D-glucosamine and D-glucuronate residues in hyaluronate.. Catalyzes hyaluronan degradation into small fragments that are endocytosed and degraded in lysosomes by HYAL1 and exoglycosidases. Essential for the breakdown of extracellular matrix hyaluronan. The chain is Hyaluronidase-2 (HYAL2) from Bos taurus (Bovine).